The primary structure comprises 465 residues: MAMTMRSTRHASKLAQTARLALTNSRRYSTAEPDLKTALKAVIPAKRELFKQVKERSDEVIGEVKVANVIGGMRGLKSMLWEGSVLDPEEGIRFHGKTIKDCQKELPKGTSGTEMLPEAMFWLLLTGQVPSTNQVRAFSRELAEQSHLPQHILDLIKSFPRSMHPMTQLSIAVAALNTESKFAKAYEKGLSKADYWEPTFDDSISLLAKIPRVAALVFRPDEVDQVGTQALDASQDWSYNFAELLGKGGKENQDFHDLLRLYLALHGDHEGGNVSAHATHLVGSALSDPFLSYSAGLLGLAGPLHGLAAQEVLRWILAMQDKIGTKFTDDDVRNYLWDTLKSGRVVPGYGHGVLRKPDPRFQALMDFAATRPDVLANPVFQLVKKNSEIAPAVLTEHGKTKNPHPNVDAASGVLFYHYGFQQPLYYTVTFGVSRALGPLVQLIWDRALGLPIERPKSINLLGLKK.

A mitochondrion-targeting transit peptide spans 1 to 29 (MAMTMRSTRHASKLAQTARLALTNSRRYS). Positions 74 and 192 each coordinate CoA. Oxaloacetate is bound at residue His-269. Leu-304 is a CoA binding site. Residue His-305 is part of the active site. Positions 346, 348, and 349 each coordinate CoA. Positions 351 and 360 each coordinate oxaloacetate. The active site involves His-351. 3 residues coordinate CoA: Thr-400, Lys-401, and Asn-406. Asp-408 is a catalytic residue. 2 residues coordinate oxaloacetate: Arg-434 and Arg-454.

It belongs to the citrate synthase family. As to quaternary structure, homodimer.

It is found in the mitochondrion matrix. It catalyses the reaction propanoyl-CoA + oxaloacetate + H2O = (2S,3S)-2-methylcitrate + CoA + H(+). The catalysed reaction is oxaloacetate + acetyl-CoA + H2O = citrate + CoA + H(+). The protein operates within organic acid metabolism; propanoate degradation. Its function is as follows. Component of the methylcitrate cycle that catalyzes the synthesis of (2S,3S)-2-methylcitrate from propionyl-CoA and oxaloacetate. Plays an important role in detoxification of propionyl-CoA, an inhibitor of both primary and secondary metabolism. Also has citrate synthase activity using as substrates acetyl-CoA and oxaloacetate. Plays a key role in the estabishment of invasive pulmonary aspergillosis. In Aspergillus fumigatus (strain CBS 144.89 / FGSC A1163 / CEA10) (Neosartorya fumigata), this protein is 2-methylcitrate synthase, mitochondrial.